A 384-amino-acid chain; its full sequence is UDP-N-acetylglucosamine--N-acetylmuramyl-(pentapeptide) pyrophosphoryl-undecaprenol N-acetylglucosamine transferase (384 aa).

Residues 17-19 (TGG), asparagine 131, arginine 172, serine 200, and glutamine 301 each bind UDP-N-acetyl-alpha-D-glucosamine.

Belongs to the glycosyltransferase 28 family. MurG subfamily.

The protein resides in the cell inner membrane. The enzyme catalyses di-trans,octa-cis-undecaprenyl diphospho-N-acetyl-alpha-D-muramoyl-L-alanyl-D-glutamyl-meso-2,6-diaminopimeloyl-D-alanyl-D-alanine + UDP-N-acetyl-alpha-D-glucosamine = di-trans,octa-cis-undecaprenyl diphospho-[N-acetyl-alpha-D-glucosaminyl-(1-&gt;4)]-N-acetyl-alpha-D-muramoyl-L-alanyl-D-glutamyl-meso-2,6-diaminopimeloyl-D-alanyl-D-alanine + UDP + H(+). It participates in cell wall biogenesis; peptidoglycan biosynthesis. Functionally, cell wall formation. Catalyzes the transfer of a GlcNAc subunit on undecaprenyl-pyrophosphoryl-MurNAc-pentapeptide (lipid intermediate I) to form undecaprenyl-pyrophosphoryl-MurNAc-(pentapeptide)GlcNAc (lipid intermediate II). The chain is UDP-N-acetylglucosamine--N-acetylmuramyl-(pentapeptide) pyrophosphoryl-undecaprenol N-acetylglucosamine transferase from Granulibacter bethesdensis (strain ATCC BAA-1260 / CGDNIH1).